Consider the following 208-residue polypeptide: Probable thymidylate kinase (208 aa).

9-16 is an ATP binding site; sequence GIDGAGKS.

This sequence belongs to the thymidylate kinase family.

The enzyme catalyses dTMP + ATP = dTDP + ADP. This is Probable thymidylate kinase from Thermococcus gammatolerans (strain DSM 15229 / JCM 11827 / EJ3).